The sequence spans 163 residues: Putative pre-16S rRNA nuclease (163 aa).

This sequence belongs to the YqgF nuclease family.

Its subcellular location is the cytoplasm. In terms of biological role, could be a nuclease involved in processing of the 5'-end of pre-16S rRNA. This chain is Putative pre-16S rRNA nuclease, found in Rhodopseudomonas palustris (strain BisA53).